The chain runs to 309 residues: Genome polyprotein (309 aa).

At G1–N40 the chain is on the cytoplasmic side. Residues Y36–G39 are important for lipid droplets localization. A helical membrane pass occupies residues L41–A61. A propeptide spans L50–A63 (ER anchor for the core protein, removed in mature form by host signal peptidase). Residues S62–G230 lie on the Lumenal side of the membrane. N-linked (GlcNAc...) asparagine; by host glycosylation is found at N68, N81, and N106. The tract at residues L137–R168 is important for fusion. A glycan (N-linked (GlcNAc...) asparagine; by host) is linked at N177. Residues I231–A251 form a helical membrane-spanning segment. The Lumenal portion of the chain corresponds to G252 to W309. An HVR1 region spans residues T256–D282. N-linked (GlcNAc...) (high mannose) asparagine; by host glycans are attached at residues N289, N295, and N302.

Belongs to the hepacivirus polyprotein family. In terms of assembly, homooligomer. Interacts with E1 (via C-terminus). Interacts with the non-structural protein 5A. Interacts (via N-terminus) with host STAT1 (via SH2 domain); this interaction results in decreased STAT1 phosphorylation and ubiquitin-mediated proteasome-dependent STAT1 degradation, leading to decreased IFN-stimulated gene transcription. Interacts with host STAT3; this interaction constitutively activates STAT3. Interacts with host LTBR receptor. Interacts with host TNFRSF1A receptor and possibly induces apoptosis. Interacts with host HNRPK. Interacts with host YWHAE. Interacts with host UBE3A/E6AP. Interacts with host DDX3X. Interacts with host APOA2. Interacts with host RXRA protein. Interacts with host SP110 isoform 3/Sp110b; this interaction sequesters the transcriptional corepressor SP110 away from the nucleus. Interacts with host CREB3 nuclear transcription protein; this interaction triggers cell transformation. Interacts with host ACY3. Interacts with host C1QR1. Interacts with host RBM24; this interaction, which enhances the interaction of the mature core protein with 5'-UTR, may inhibit viral translation and favor replication. Interacts with host EIF2AK2/PKR; this interaction induces the autophosphorylation of EIF2AK2. Part of the viral assembly initiation complex composed of NS2, E1, E2, NS3, NS4A, NS5A and the mature core protein. Forms a heterodimer with envelope glycoprotein E2. Interacts with mature core protein. Interacts with protease NS2. The heterodimer E1/E2 interacts with host CLDN1; this interaction plays a role in viral entry into host cell. Interacts with host SPSB2 (via C-terminus). Part of the viral assembly initiation complex composed of NS2, E1, E2, NS3, NS4A, NS5A and the mature core protein. As to quaternary structure, forms a heterodimer with envelope glycoprotein E1. Interacts with host CD81 and SCARB1 receptors; these interactions play a role in viral entry into host cell. Interacts with host EIF2AK2/PKR; this interaction inhibits EIF2AK2 and probably allows the virus to evade the innate immune response. Interacts with host CD209/DC-SIGN and CLEC4M/DC-SIGNR. Interact with host SPCS1; this interaction is essential for viral particle assembly. Interacts with protease NS2. The heterodimer E1/E2 interacts with host CLDN1; this interaction plays a role in viral entry into host cell. Part of the viral assembly initiation complex composed of NS2, E1, E2, NS3, NS4A, NS5A and the mature core protein. Specific enzymatic cleavages in vivo yield mature proteins. The structural proteins, core, E1, E2 and p7 are produced by proteolytic processing by host signal peptidases. The core protein precursor is synthesized as a 23 kDa, which is retained in the ER membrane through the hydrophobic signal peptide. Cleavage by the signal peptidase releases the 21 kDa mature core protein. The cleavage of the core protein precursor occurs between aminoacids 176 and 188 but the exact cleavage site is not known. Some degraded forms of the core protein appear as well during the course of infection. The other proteins (p7, NS2, NS3, NS4A, NS4B, NS5A and NS5B) are cleaved by the viral proteases. Autoprocessing between NS2 and NS3 is mediated by the NS2 cysteine protease catalytic domain and regulated by the NS3 N-terminal domain. In terms of processing, phosphorylated by host PKC and PKA. Post-translationally, ubiquitinated; mediated by UBE3A and leading to core protein subsequent proteasomal degradation. Highly N-glycosylated.

It localises to the host endoplasmic reticulum membrane. The protein resides in the host mitochondrion membrane. It is found in the virion. Its subcellular location is the host cytoplasm. The protein localises to the host nucleus. It localises to the host lipid droplet. The protein resides in the virion membrane. Its function is as follows. Packages viral RNA to form a viral nucleocapsid, and promotes virion budding. Participates in the viral particle production as a result of its interaction with the non-structural protein 5A. Binds RNA and may function as a RNA chaperone to induce the RNA structural rearrangements taking place during virus replication. Modulates viral translation initiation by interacting with viral IRES and 40S ribosomal subunit. Affects various cell signaling pathways, host immunity and lipid metabolism. Prevents the establishment of cellular antiviral state by blocking the interferon-alpha/beta (IFN-alpha/beta) and IFN-gamma signaling pathways and by blocking the formation of phosphorylated STAT1 and promoting ubiquitin-mediated proteasome-dependent degradation of STAT1. Activates STAT3 leading to cellular transformation. Regulates the activity of cellular genes, including c-myc and c-fos. May repress the promoter of p53, and sequester CREB3 and SP110 isoform 3/Sp110b in the cytoplasm. Represses cell cycle negative regulating factor CDKN1A, thereby interrupting an important check point of normal cell cycle regulation. Targets transcription factors involved in the regulation of inflammatory responses and in the immune response: suppresses TNF-induced NF-kappa-B activation, and activates AP-1. Binds to dendritic cells (DCs) via C1QR1, resulting in down-regulation of T-lymphocytes proliferation. Alters lipid metabolism by interacting with hepatocellular proteins involved in lipid accumulation and storage. Induces up-regulation of FAS promoter activity, and thereby contributes to the increased triglyceride accumulation in hepatocytes (steatosis). In terms of biological role, forms a heterodimer with envelope glycoprotein E2, which mediates virus attachment to the host cell, virion internalization through clathrin-dependent endocytosis and fusion with host membrane. Fusion with the host cell is most likely mediated by both E1 and E2, through conformational rearrangements of the heterodimer required for fusion rather than a classical class II fusion mechanism. E1/E2 heterodimer binds host apolipoproteins such as APOB and ApoE thereby forming a lipo-viro-particle (LVP). APOE associated to the LVP allows the initial virus attachment to cell surface receptors such as the heparan sulfate proteoglycans (HSPGs), syndecan-1 (SDC1), syndecan-1 (SDC2), the low-density lipoprotein receptor (LDLR) and scavenger receptor class B type I (SCARB1). The cholesterol transfer activity of SCARB1 allows E2 exposure and binding of E2 to SCARB1 and the tetraspanin CD81. E1/E2 heterodimer binding on CD81 activates the epithelial growth factor receptor (EGFR) signaling pathway. Diffusion of the complex E1-E2-EGFR-SCARB1-CD81 to the cell lateral membrane allows further interaction with Claudin 1 (CLDN1) and occludin (OCLN) to finally trigger HCV entry. Forms a heterodimer with envelope glycoprotein E1, which mediates virus attachment to the host cell, virion internalization through clathrin-dependent endocytosis and fusion with host membrane. Fusion with the host cell is most likely mediated by both E1 and E2, through conformational rearrangements of the heterodimer required for fusion rather than a classical class II fusion mechanism. The interaction between envelope glycoprotein E2 and host apolipoprotein E/APOE allows the proper assembly, maturation and infectivity of the viral particles. This interaction is probably promoted via the up-regulation of cellular autophagy by the virus. E1/E2 heterodimer binds host apolipoproteins such as APOB and APOE thereby forming a lipo-viro-particle (LVP). APOE associated to the LVP allows the initial virus attachment to cell surface receptors such as the heparan sulfate proteoglycans (HSPGs), syndecan-1 (SDC1), syndecan-1 (SDC2), the low-density lipoprotein receptor (LDLR) and scavenger receptor class B type I (SCARB1). The cholesterol transfer activity of SCARB1 allows E2 exposure and binding of E2 to SCARB1 and the tetraspanin CD81. E1/E2 heterodimer binding on CD81 activates the epithelial growth factor receptor (EGFR) signaling pathway. Diffusion of the complex E1-E2-EGFR-SCARB1-CD81 to the cell lateral membrane allows further interaction with Claudin 1 (CLDN1) and occludin (OCLN) to finally trigger HCV entry. Inhibits host EIF2AK2/PKR activation, preventing the establishment of an antiviral state. Viral ligand for CD209/DC-SIGN and CLEC4M/DC-SIGNR, which are respectively found on dendritic cells (DCs), and on liver sinusoidal endothelial cells and macrophage-like cells of lymph node sinuses. These interactions allow the capture of circulating HCV particles by these cells and subsequent facilitated transmission to permissive cells such as hepatocytes and lymphocyte subpopulations. In Hepatitis C virus (isolate HCT27) (HCV), this protein is Genome polyprotein.